A 98-amino-acid polypeptide reads, in one-letter code: NADH-ubiquinone oxidoreductase chain 4L (98 aa).

3 consecutive transmembrane segments (helical) span residues 1 to 21, 30 to 50, and 61 to 81; these read MSLT…GLLM, LLCL…TILI, and IILL…LVAV.

The protein belongs to the complex I subunit 4L family. As to quaternary structure, core subunit of respiratory chain NADH dehydrogenase (Complex I) which is composed of 45 different subunits.

Its subcellular location is the mitochondrion inner membrane. It carries out the reaction a ubiquinone + NADH + 5 H(+)(in) = a ubiquinol + NAD(+) + 4 H(+)(out). In terms of biological role, core subunit of the mitochondrial membrane respiratory chain NADH dehydrogenase (Complex I) which catalyzes electron transfer from NADH through the respiratory chain, using ubiquinone as an electron acceptor. Part of the enzyme membrane arm which is embedded in the lipid bilayer and involved in proton translocation. The protein is NADH-ubiquinone oxidoreductase chain 4L (MT-ND4L) of Pipistrellus abramus (Japanese pipistrelle).